The sequence spans 353 residues: UPF0283 membrane protein YcjF (353 aa).

3 helical membrane-spanning segments follow: residues 70–90, 100–120, and 213–233; these read MVMGGLALFGASVVGQGVQWT, VALGGCAAGALIIGAGVGSVV, and ESTLMIAVSPLALVDMAFIAW.

The protein belongs to the UPF0283 family.

The protein resides in the cell inner membrane. In Escherichia coli O45:K1 (strain S88 / ExPEC), this protein is UPF0283 membrane protein YcjF.